A 233-amino-acid chain; its full sequence is UPF0502 protein YpsIP31758_2048 (233 aa).

The protein belongs to the UPF0502 family.

The polypeptide is UPF0502 protein YpsIP31758_2048 (Yersinia pseudotuberculosis serotype O:1b (strain IP 31758)).